The primary structure comprises 1757 residues: 1-phosphatidylinositol-3-phosphate 5-kinase FAB1A (1757 aa).

The FYVE-type zinc finger occupies Asp-36–Glu-102. Zn(2+) is bound by residues Cys-42, Cys-45, Cys-58, Cys-61, Cys-66, Cys-69, Cys-94, and Cys-97. Disordered regions lie at residues Ala-125–Gln-193, Lys-276–Ser-297, Leu-313–Pro-346, and Ala-684–Ser-709. The span at Asn-134 to Gly-145 shows a compositional bias: polar residues. Residues Pro-317–Asp-337 show a composition bias toward acidic residues. Residues Leu-1014 to Asp-1087 are a coiled coil. The PIPK domain maps to Ser-1395 to Phe-1719. Positions Ala-1729–Ala-1739 are enriched in low complexity. The interval Ala-1729–Ser-1757 is disordered.

Component of the PI(3,5)P2 regulatory complex at least composed of ATG18, SAC/FIG4, FAB1 and VAC14. It depends on Mg(2+) as a cofactor. Mn(2+) is required as a cofactor. Ubiquitous with highest expression levels in pollen, seed, and senescent leaves.

It is found in the endosome membrane. It carries out the reaction a 1,2-diacyl-sn-glycero-3-phospho-(1D-myo-inositol-3-phosphate) + ATP = a 1,2-diacyl-sn-glycero-3-phospho-(1D-myo-inositol-3,5-bisphosphate) + ADP + H(+). The PI(3,5)P2 regulatory complex regulates both the synthesis and turnover of phosphatidylinositol 3,5-bisphosphate (PtdIns(3,5)P2). Catalyzes the phosphorylation of phosphatidylinositol 3-phosphate on the fifth hydroxyl of the myo-inositol ring, to form phosphatidylinositol 3,5-bisphosphate. Plays an important role in maintenance of endomembrane homeostasis including endocytosis, vacuole formation, and vacuolar acidification processes. Required for development of viable pollen. Might mediate recycling of auxin transporters. The chain is 1-phosphatidylinositol-3-phosphate 5-kinase FAB1A (FAB1A) from Arabidopsis thaliana (Mouse-ear cress).